The chain runs to 446 residues: Protein IQ-DOMAIN 19 (446 aa).

The interval 93 to 140 is disordered; the sequence is IPGTPKEKRRWSFRRSSATGPPPPACAITLKDSPPPPPPPPPPPPLQQ. A compositionally biased stretch (pro residues) spans 125–139; it reads SPPPPPPPPPPPPLQ. IQ domains lie at 163–191 and 192–214; these read EEFA…GLVK and LQAL…CMQA. A calmodulin-binding region spans residues 214-231; it reads ALITLQAKAREQRIRMIG. A compositionally biased stretch (low complexity) spans 332-345; sequence QSSKAKARSQSAPK. Residues 332 to 398 are disordered; sequence QSSKAKARSQ…TAKESQQHHH (67 aa). Positions 379–392 are enriched in polar residues; it reads QRSSSQLGSNTAKE.

It belongs to the IQD family. As to quaternary structure, binds to multiple calmodulin (CaM) in the presence of Ca(2+) and CaM-like proteins.

It is found in the cytoplasm. The protein localises to the cytoskeleton. The protein resides in the cell membrane. May be involved in cooperative interactions with calmodulins or calmodulin-like proteins. Recruits calmodulin proteins to microtubules, thus being a potential scaffold in cellular signaling and trafficking. Acts as a positive regulator of trichome branch initiation. May associate with nucleic acids and regulate gene expression at the transcriptional or post-transcriptional level. The chain is Protein IQ-DOMAIN 19 from Arabidopsis thaliana (Mouse-ear cress).